Consider the following 401-residue polypeptide: Argininosuccinate synthase (401 aa).

Position 8–16 (8–16 (AYSGGLDTS)) interacts with ATP. The L-citrulline site is built by Tyr86 and Ser91. Gly116 contacts ATP. Residues Thr118, Asn122, and Asp123 each contribute to the L-aspartate site. Residue Asn122 participates in L-citrulline binding. Positions 126, 175, 184, 260, and 272 each coordinate L-citrulline.

Belongs to the argininosuccinate synthase family. Type 1 subfamily. Homotetramer.

The protein localises to the cytoplasm. The catalysed reaction is L-citrulline + L-aspartate + ATP = 2-(N(omega)-L-arginino)succinate + AMP + diphosphate + H(+). It participates in amino-acid biosynthesis; L-arginine biosynthesis; L-arginine from L-ornithine and carbamoyl phosphate: step 2/3. The polypeptide is Argininosuccinate synthase (Clostridium kluyveri (strain ATCC 8527 / DSM 555 / NBRC 12016 / NCIMB 10680 / K1)).